The following is a 238-amino-acid chain: Ribonuclease PH (238 aa).

Phosphate-binding positions include arginine 86 and 124 to 126; that span reads GTR.

It belongs to the RNase PH family. In terms of assembly, homohexameric ring arranged as a trimer of dimers.

The enzyme catalyses tRNA(n+1) + phosphate = tRNA(n) + a ribonucleoside 5'-diphosphate. Its function is as follows. Phosphorolytic 3'-5' exoribonuclease that plays an important role in tRNA 3'-end maturation. Removes nucleotide residues following the 3'-CCA terminus of tRNAs; can also add nucleotides to the ends of RNA molecules by using nucleoside diphosphates as substrates, but this may not be physiologically important. Probably plays a role in initiation of 16S rRNA degradation (leading to ribosome degradation) during starvation. The polypeptide is Ribonuclease PH (Klebsiella pneumoniae (strain 342)).